Reading from the N-terminus, the 445-residue chain is 3-phosphoshikimate 1-carboxyvinyltransferase (445 aa).

The interval 1–25 (MSHSDQTSPLEARKSAALSGTARVP) is disordered. Lys-28, Ser-29, and Arg-33 together coordinate 3-phosphoshikimate. Phosphoenolpyruvate is bound at residue Lys-28. Phosphoenolpyruvate-binding residues include Gly-101 and Arg-129. 3-phosphoshikimate is bound by residues Ser-175, Gln-177, Asp-328, and Lys-355. Phosphoenolpyruvate is bound at residue Gln-177. Asp-328 (proton acceptor) is an active-site residue. Residues Arg-359 and Arg-402 each coordinate phosphoenolpyruvate.

Belongs to the EPSP synthase family. In terms of assembly, monomer.

The protein resides in the cytoplasm. It carries out the reaction 3-phosphoshikimate + phosphoenolpyruvate = 5-O-(1-carboxyvinyl)-3-phosphoshikimate + phosphate. Its pathway is metabolic intermediate biosynthesis; chorismate biosynthesis; chorismate from D-erythrose 4-phosphate and phosphoenolpyruvate: step 6/7. Functionally, catalyzes the transfer of the enolpyruvyl moiety of phosphoenolpyruvate (PEP) to the 5-hydroxyl of shikimate-3-phosphate (S3P) to produce enolpyruvyl shikimate-3-phosphate and inorganic phosphate. The protein is 3-phosphoshikimate 1-carboxyvinyltransferase of Rhodopseudomonas palustris (strain BisB5).